The sequence spans 1235 residues: DNA polymerase catalytic subunit (1235 aa).

Disordered regions lie at residues 640–692 (QGRF…TAGR) and 1098–1134 (AAAP…ASKP). Over residues 650 to 661 (APKRPAAAREDE) the composition is skewed to basic and acidic residues. Residues 662 to 675 (ERPEEEGEDEDERE) show a composition bias toward acidic residues. Basic and acidic residues predominate over residues 676 to 691 (EGGGEREPEGARETAG).

Belongs to the DNA polymerase type-B family. In terms of assembly, forms a complex with the ssDNA-binding protein UL29, the DNA polymerase processivity factor, and the alkaline exonuclease. Interacts with the putative helicase-primase complex subunit UL8; this interaction may coordinate leading and lagging strand DNA synthesis at the replication fork.

It is found in the host nucleus. The enzyme catalyses DNA(n) + a 2'-deoxyribonucleoside 5'-triphosphate = DNA(n+1) + diphosphate. It catalyses the reaction Endonucleolytic cleavage to 5'-phosphomonoester.. In terms of biological role, replicates viral genomic DNA. The replication complex is composed of six viral proteins: the DNA polymerase, processivity factor, primase, primase-associated factor, helicase, and ssDNA-binding protein. Additionally, the polymerase contains an intrinsic ribonuclease H (RNase H) activity that specifically degrades RNA/DNA heteroduplexes or duplex DNA substrates in the 5' to 3' direction. Therefore, it can catalyze the excision of the RNA primers that initiate the synthesis of Okazaki fragments at a replication fork during viral DNA replication. The protein is DNA polymerase catalytic subunit of Homo sapiens (Human).